We begin with the raw amino-acid sequence, 427 residues long: Adenylosuccinate synthetase (427 aa).

GTP-binding positions include 12 to 18 and 40 to 42; these read GDEGKGK and GHT. The active-site Proton acceptor is Asp13. Positions 13 and 40 each coordinate Mg(2+). IMP is bound by residues 13–16, 38–41, Thr128, Arg142, Gln223, Thr238, and Arg302; these read DEGK and NAGH. Catalysis depends on His41, which acts as the Proton donor. 298–304 is a binding site for substrate; the sequence is TTTGRNR. Residues Arg304, 330–332, and 412–414 contribute to the GTP site; these read KLD and GVG.

This sequence belongs to the adenylosuccinate synthetase family. As to quaternary structure, homodimer. The cofactor is Mg(2+).

Its subcellular location is the cytoplasm. The enzyme catalyses IMP + L-aspartate + GTP = N(6)-(1,2-dicarboxyethyl)-AMP + GDP + phosphate + 2 H(+). Its pathway is purine metabolism; AMP biosynthesis via de novo pathway; AMP from IMP: step 1/2. Plays an important role in the de novo pathway of purine nucleotide biosynthesis. Catalyzes the first committed step in the biosynthesis of AMP from IMP. The sequence is that of Adenylosuccinate synthetase from Thermobifida fusca (strain YX).